Consider the following 446-residue polypeptide: Tubulin beta-2 chain (446 aa).

Residues glutamine 11, glutamate 69, serine 138, glycine 142, threonine 143, glycine 144, asparagine 204, and asparagine 226 each contribute to the GTP site. Position 69 (glutamate 69) interacts with Mg(2+). The interval 424-446 is disordered; the sequence is QYQEATADEEGEFDEDEEGGGDE. Over residues 429–446 the composition is skewed to acidic residues; the sequence is TADEEGEFDEDEEGGGDE.

Belongs to the tubulin family. In terms of assembly, dimer of alpha and beta chains. A typical microtubule is a hollow water-filled tube with an outer diameter of 25 nm and an inner diameter of 15 nM. Alpha-beta heterodimers associate head-to-tail to form protofilaments running lengthwise along the microtubule wall with the beta-tubulin subunit facing the microtubule plus end conferring a structural polarity. Microtubules usually have 13 protofilaments but different protofilament numbers can be found in some organisms and specialized cells. It depends on Mg(2+) as a cofactor.

It localises to the cytoplasm. The protein resides in the cytoskeleton. Its function is as follows. Tubulin is the major constituent of microtubules, a cylinder consisting of laterally associated linear protofilaments composed of alpha- and beta-tubulin heterodimers. Microtubules grow by the addition of GTP-tubulin dimers to the microtubule end, where a stabilizing cap forms. Below the cap, tubulin dimers are in GDP-bound state, owing to GTPase activity of alpha-tubulin. The chain is Tubulin beta-2 chain (betaTub85D) from Drosophila erecta (Fruit fly).